A 406-amino-acid polypeptide reads, in one-letter code: Enoyl-[acyl-carrier-protein] reductase [NADH] (406 aa).

Residues 48–53 (GASTGF), 74–75 (FE), 111–112 (DA), and 140–141 (IA) contribute to the NAD(+) site. Tyr226 provides a ligand contact to substrate. Tyr236 functions as the Proton donor in the catalytic mechanism. Residues Lys245 and 275 to 277 (LVT) contribute to the NAD(+) site.

This sequence belongs to the TER reductase family. As to quaternary structure, monomer.

The catalysed reaction is a 2,3-saturated acyl-[ACP] + NAD(+) = a (2E)-enoyl-[ACP] + NADH + H(+). The protein operates within lipid metabolism; fatty acid biosynthesis. Its function is as follows. Involved in the final reduction of the elongation cycle of fatty acid synthesis (FAS II). Catalyzes the reduction of a carbon-carbon double bond in an enoyl moiety that is covalently linked to an acyl carrier protein (ACP). The protein is Enoyl-[acyl-carrier-protein] reductase [NADH] of Coxiella burnetii (strain RSA 331 / Henzerling II).